Here is a 266-residue protein sequence, read N- to C-terminus: Beta-lactamase OXA-11 (266 aa).

A signal peptide spans 1-20; it reads MKTFAAYVIIACLSSTALAG. Residue serine 67 is the Acyl-ester intermediate of the active site. Position 70 is an N6-carboxylysine (lysine 70). A substrate-binding site is contributed by 205-207; the sequence is KTG.

The protein belongs to the class-D beta-lactamase family.

It catalyses the reaction a beta-lactam + H2O = a substituted beta-amino acid. Its function is as follows. Hydrolyzes carbenicillin, oxacillin and cephalosporin. Does not hydrolyze cefoxitin or carbapenems. The chain is Beta-lactamase OXA-11 (bla) from Pseudomonas aeruginosa.